The primary structure comprises 592 residues: Aspartate--tRNA(Asp/Asn) ligase (592 aa).

E182 serves as a coordination point for L-aspartate. The tract at residues 206–209 (QIFK) is aspartate. R228 contributes to the L-aspartate binding site. ATP is bound by residues 228 to 230 (RDE) and Q237. L-aspartate is bound at residue H455. E489 provides a ligand contact to ATP. R496 lines the L-aspartate pocket. Position 541 to 544 (541 to 544 (GLDR)) interacts with ATP.

Belongs to the class-II aminoacyl-tRNA synthetase family. Type 1 subfamily. In terms of assembly, homodimer.

It is found in the cytoplasm. The catalysed reaction is tRNA(Asx) + L-aspartate + ATP = L-aspartyl-tRNA(Asx) + AMP + diphosphate. In terms of biological role, aspartyl-tRNA synthetase with relaxed tRNA specificity since it is able to aspartylate not only its cognate tRNA(Asp) but also tRNA(Asn). Reaction proceeds in two steps: L-aspartate is first activated by ATP to form Asp-AMP and then transferred to the acceptor end of tRNA(Asp/Asn). The polypeptide is Aspartate--tRNA(Asp/Asn) ligase (Caldanaerobacter subterraneus subsp. tengcongensis (strain DSM 15242 / JCM 11007 / NBRC 100824 / MB4) (Thermoanaerobacter tengcongensis)).